The following is a 195-amino-acid chain: Imidazoleglycerol-phosphate dehydratase (195 aa).

This sequence belongs to the imidazoleglycerol-phosphate dehydratase family.

The protein resides in the cytoplasm. The catalysed reaction is D-erythro-1-(imidazol-4-yl)glycerol 3-phosphate = 3-(imidazol-4-yl)-2-oxopropyl phosphate + H2O. Its pathway is amino-acid biosynthesis; L-histidine biosynthesis; L-histidine from 5-phospho-alpha-D-ribose 1-diphosphate: step 6/9. The chain is Imidazoleglycerol-phosphate dehydratase from Methylorubrum extorquens (strain CM4 / NCIMB 13688) (Methylobacterium extorquens).